A 172-amino-acid chain; its full sequence is MERAIQGNDAREQANSERWDGGSGGTTSPFKLPDESPSWTEWRLHNDETNSNQDNPLGFKESWGFGKVVFKRYLRYDRTEASLHRVLGSWTGDSVNYAASRFFGFDQIGCTYSIRFRGVSITVSGGSRTLQHLCEMAIRSKQELLQLAPIEVESNVSRGCPEGTETFEKESE.

The span at 1-20 (MERAIQGNDAREQANSERWD) shows a compositional bias: basic and acidic residues. Residues 1–38 (MERAIQGNDAREQANSERWDGGSGGTTSPFKLPDESPS) form a disordered region.

The protein belongs to the tombusviruses protein p19 family. In terms of assembly, homodimer.

In terms of biological role, acts as a suppressor of RNA-mediated gene silencing, also known as post-transcriptional gene silencing (PTGS), a mechanism of plant viral defense that limits the accumulation of viral RNAs. Binds to short interfering RNAs (siRNAs) with high affinity. Acts as a molecular caliper to specifically select siRNAs based on the length of the duplex region of the RNA. This chain is RNA silencing suppressor p19, found in Capsicum annuum (Capsicum pepper).